The primary structure comprises 113 residues: Large ribosomal subunit protein uL22 (113 aa).

This sequence belongs to the universal ribosomal protein uL22 family. In terms of assembly, part of the 50S ribosomal subunit.

Functionally, this protein binds specifically to 23S rRNA; its binding is stimulated by other ribosomal proteins, e.g. L4, L17, and L20. It is important during the early stages of 50S assembly. It makes multiple contacts with different domains of the 23S rRNA in the assembled 50S subunit and ribosome. In terms of biological role, the globular domain of the protein is located near the polypeptide exit tunnel on the outside of the subunit, while an extended beta-hairpin is found that lines the wall of the exit tunnel in the center of the 70S ribosome. This is Large ribosomal subunit protein uL22 from Geobacillus thermodenitrificans (strain NG80-2).